The primary structure comprises 244 residues: 14-3-3 protein beta/alpha-A (244 aa).

Position 1 is an N-acetylmethionine (M1).

This sequence belongs to the 14-3-3 family. As to quaternary structure, homodimer, and heterodimer with other family members.

It localises to the cytoplasm. Its function is as follows. Adapter protein implicated in the regulation of a large spectrum of both general and specialized signaling pathways. Binds to a large number of partners, usually by recognition of a phosphoserine or phosphothreonine motif. Binding generally results in the modulation of the activity of the binding partner. This chain is 14-3-3 protein beta/alpha-A (ywhab-a), found in Xenopus laevis (African clawed frog).